The following is a 299-amino-acid chain: Homoserine kinase (299 aa).

ATP is bound at residue 85-95; it reads PMSRGLGSSAT.

The protein belongs to the GHMP kinase family. Homoserine kinase subfamily.

It localises to the cytoplasm. It carries out the reaction L-homoserine + ATP = O-phospho-L-homoserine + ADP + H(+). It functions in the pathway amino-acid biosynthesis; L-threonine biosynthesis; L-threonine from L-aspartate: step 4/5. Catalyzes the ATP-dependent phosphorylation of L-homoserine to L-homoserine phosphate. The polypeptide is Homoserine kinase (Clostridium novyi (strain NT)).